A 372-amino-acid chain; its full sequence is Protein phosphatase Mn(2+)-dependent 1K (372 aa).

The N-terminal 29 residues, Met-1–Gln-29, are a transit peptide targeting the mitochondrion. Positions Arg-46–Trp-61 are critical for association with the BCKDH complex. The region spanning Asn-94 to Phe-346 is the PPM-type phosphatase domain. Residues Asp-127 and Gly-128 each contribute to the Mn(2+) site. Ser-248 is subject to Phosphoserine. Residues Asp-298 and Asp-337 each contribute to the Mn(2+) site.

It belongs to the PP2C family. In terms of assembly, interacts with E1 and E2 components of the branched-chain alpha-ketoacid dehydrogenase (BCKDH) complex. Interacts with both BCKDHA and BCKDHB chains of the E1 subunit. Interacts with the 24-meric DBT/E2 core of the BCKD complex with a 1:1 stoichiometry; the N-terminal region (residues 49-61) of PPM1K and C-terminal linker of the lipoyl domain of DBT/E2 (residues 145-160) are critical for this interaction whereas the lipoyl prosthetic group is dispensable. Competes with BCKDK for binding to DBT/E2; this interaction is modulated by branched-chain alpha-keto acids (BCKAs). At steady state, BCKDH holoenzyme preferentially binds BCKDK and BCKDHA/E1 is phosphorylated. In response to high levels of BCKAs, BCKDK is replaced by PPM1K leading to BCKDHA/E1 dephosphorylation. Requires Mn(2+) as cofactor.

The protein resides in the mitochondrion matrix. It catalyses the reaction O-phospho-L-seryl-[3-methyl-2-oxobutanoate dehydrogenase] + H2O = L-seryl-[3-methyl-2-oxobutanoate dehydrogenase] + phosphate. The enzyme catalyses O-phospho-L-seryl-[protein] + H2O = L-seryl-[protein] + phosphate. It functions in the pathway protein modification. Functionally, serine/threonine-protein phosphatase component of macronutrients metabolism. Together with BCKDK serves as a metabolic regulatory node that coordinates branched-chain amino acids (BCAAs) and protein synthesis with glucose and lipid metabolism via two distinct phosphoprotein targets: BCKDHA/E1a subunit of the branched-chain alpha-ketoacid dehydrogenase (BCKDH) complex and ACLY, a lipogenic enzyme of Krebs cycle. At high levels of branched-chain ketoacids (BCKAs), dephosphorylates and activates mitochondrial BCKDH complex, a multisubunit complex consisting of three components, heterotetrameric E1 composed of BCKDHA and BCKDHB chains, 24-meric E2 core composed of DBT and homodimeric E3 composed of DLD, each involved in different steps of BCAA catabolism. Tightly associates with the E2 subunit of BCKDH complex and dephosphorylates Ser-333 of BCKDHA chain of the E1 subunit likely through on-off binding to individual E2 subunits of the 24-meric E2 core to increase the efficiency of the dephosphorylation reaction. Appears to dephosphorylate and inactivate cytosolic ACLY in response to changes of cellular carbohydrate abundance. Overnutrition and in particular high-fructose diet, activates MLXIPL/ChREBP leading to increased BCKDK to PPM1K ratio, phosphorylation of ACLY on Ser-454 and activation of its enzymatic activity that ultimately results in the generation of acetyl-CoA and malonyl-CoA immediate substrates of de novo lipogenesis. Recognizes phosphosites having SxS or RxxS motifs and strictly depends on Mn(2+) ions for the phosphatase activity. Regulates Ca(2+)-induced opening of mitochondrial transition pore and apoptotic cell death. The polypeptide is Protein phosphatase Mn(2+)-dependent 1K (Ppm1k) (Rattus norvegicus (Rat)).